Here is a 269-residue protein sequence, read N- to C-terminus: Shikimate dehydrogenase (NADP(+)) (269 aa).

Residues 17-19 and T64 each bind shikimate; that span reads SKS. K68 functions as the Proton acceptor in the catalytic mechanism. E80 is an NADP(+) binding site. Shikimate is bound by residues N89 and D105. Residues 130–134, 154–159, and M213 each bind NADP(+); these read GAGGA and NRTRAK. Position 215 (Y215) interacts with shikimate. G237 lines the NADP(+) pocket.

It belongs to the shikimate dehydrogenase family. As to quaternary structure, homodimer.

The catalysed reaction is shikimate + NADP(+) = 3-dehydroshikimate + NADPH + H(+). Its pathway is metabolic intermediate biosynthesis; chorismate biosynthesis; chorismate from D-erythrose 4-phosphate and phosphoenolpyruvate: step 4/7. Functionally, involved in the biosynthesis of the chorismate, which leads to the biosynthesis of aromatic amino acids. Catalyzes the reversible NADPH linked reduction of 3-dehydroshikimate (DHSA) to yield shikimate (SA). This Neisseria meningitidis serogroup B (strain ATCC BAA-335 / MC58) protein is Shikimate dehydrogenase (NADP(+)).